Consider the following 341-residue polypeptide: L-threonine 3-dehydrogenase (341 aa).

Residue cysteine 38 coordinates Zn(2+). Active-site charge relay system residues include threonine 40 and histidine 43. Residues histidine 63, glutamate 64, cysteine 93, cysteine 96, cysteine 99, and cysteine 107 each coordinate Zn(2+). Residues isoleucine 175, aspartate 195, arginine 200, 262–264 (LGI), and 286–287 (IY) each bind NAD(+).

This sequence belongs to the zinc-containing alcohol dehydrogenase family. As to quaternary structure, homotetramer. Zn(2+) is required as a cofactor.

It is found in the cytoplasm. The enzyme catalyses L-threonine + NAD(+) = (2S)-2-amino-3-oxobutanoate + NADH + H(+). It participates in amino-acid degradation; L-threonine degradation via oxydo-reductase pathway; glycine from L-threonine: step 1/2. Its function is as follows. Catalyzes the NAD(+)-dependent oxidation of L-threonine to 2-amino-3-ketobutyrate. This chain is L-threonine 3-dehydrogenase, found in Shewanella oneidensis (strain ATCC 700550 / JCM 31522 / CIP 106686 / LMG 19005 / NCIMB 14063 / MR-1).